A 98-amino-acid polypeptide reads, in one-letter code: Cystatin-A (98 aa).

The residue at position 1 (methionine 1) is an N-acetylmethionine. The short motif at 46–50 (QVVAG) is the Secondary area of contact element.

The protein belongs to the cystatin family.

Its subcellular location is the cytoplasm. Its function is as follows. This is an intracellular thiol proteinase inhibitor. The chain is Cystatin-A (CSTA) from Bos taurus (Bovine).